The sequence spans 321 residues: Genome polyprotein (321 aa).

The Cytoplasmic portion of the chain corresponds to 1 to 52 (RNLGKVIDTLTCGFADLMGYIPLVGAPLGGAARALAHGVRVLEDGVNYATGN). Residues 6–57 (VIDTLTCGFADLMGYIPLVGAPLGGAARALAHGVRVLEDGVNYATGNLPGCS) are interaction with APOA2. The segment at 48–51 (YATG) is important for lipid droplets localization. A helical transmembrane segment spans residues 53-73 (LPGCSFSLFLLALLSCLTVPA). The propeptide at 62-75 (LLALLSCLTVPASA) is ER anchor for the core protein, removed in mature form by host signal peptidase. The Lumenal segment spans residues 74 to 242 (SAYQVRNSTG…AGAHWGVLAG (169 aa)). N80, N93, and N118 each carry an N-linked (GlcNAc...) asparagine; by host glycan. The interval 149–180 (LVGSATLCSALYVGDLCGSIFLVGQLFTFSPR) is important for fusion. N189 carries N-linked (GlcNAc...) asparagine; by host glycosylation. Residues 243–263 (IAYFSMVGNWAKVLVVLLLFA) traverse the membrane as a helical segment. The Lumenal portion of the chain corresponds to 264 to 321 (GVDAETTVTGGSAAHGALGIASLFNQGARQNIQLINTNGSWHINSTALNCNDSLNTGW). The interval 268–294 (ETTVTGGSAAHGALGIASLFNQGARQN) is HVR1. Residues N301, N307, and N314 are each glycosylated (N-linked (GlcNAc...) (high mannose) asparagine; by host).

The protein belongs to the hepacivirus polyprotein family. As to quaternary structure, homooligomer. Interacts with E1 (via C-terminus). Interacts with the non-structural protein 5A. Interacts (via N-terminus) with host STAT1 (via SH2 domain); this interaction results in decreased STAT1 phosphorylation and ubiquitin-mediated proteasome-dependent STAT1 degradation, leading to decreased IFN-stimulated gene transcription. Interacts with host STAT3; this interaction constitutively activates STAT3. Interacts with host LTBR receptor. Interacts with host TNFRSF1A receptor and possibly induces apoptosis. Interacts with host HNRPK. Interacts with host YWHAE. Interacts with host UBE3A/E6AP. Interacts with host DDX3X. Interacts with host APOA2. Interacts with host RXRA protein. Interacts with host SP110 isoform 3/Sp110b; this interaction sequesters the transcriptional corepressor SP110 away from the nucleus. Interacts with host CREB3 nuclear transcription protein; this interaction triggers cell transformation. Interacts with host ACY3. Interacts with host C1QR1. Interacts with host RBM24; this interaction, which enhances the interaction of the mature core protein with 5'-UTR, may inhibit viral translation and favor replication. Interacts with host EIF2AK2/PKR; this interaction induces the autophosphorylation of EIF2AK2. Part of the viral assembly initiation complex composed of NS2, E1, E2, NS3, NS4A, NS5A and the mature core protein. In terms of assembly, forms a heterodimer with envelope glycoprotein E2. Interacts with mature core protein. Interacts with protease NS2. The heterodimer E1/E2 interacts with host CLDN1; this interaction plays a role in viral entry into host cell. Interacts with host SPSB2 (via C-terminus). Part of the viral assembly initiation complex composed of NS2, E1, E2, NS3, NS4A, NS5A and the mature core protein. Forms a heterodimer with envelope glycoprotein E1. Interacts with host CD81 and SCARB1 receptors; these interactions play a role in viral entry into host cell. Interacts with host EIF2AK2/PKR; this interaction inhibits EIF2AK2 and probably allows the virus to evade the innate immune response. Interacts with host CD209/DC-SIGN and CLEC4M/DC-SIGNR. Interact with host SPCS1; this interaction is essential for viral particle assembly. Interacts with protease NS2. The heterodimer E1/E2 interacts with host CLDN1; this interaction plays a role in viral entry into host cell. Part of the viral assembly initiation complex composed of NS2, E1, E2, NS3, NS4A, NS5A and the mature core protein. Post-translationally, specific enzymatic cleavages in vivo yield mature proteins. The structural proteins, core, E1, E2 and p7 are produced by proteolytic processing by host signal peptidases. The core protein precursor is synthesized as a 23 kDa, which is retained in the ER membrane through the hydrophobic signal peptide. Cleavage by the signal peptidase releases the 21 kDa mature core protein. The cleavage of the core protein precursor occurs between aminoacids 176 and 188 but the exact cleavage site is not known. Some degraded forms of the core protein appear as well during the course of infection. The other proteins (p7, NS2, NS3, NS4A, NS4B, NS5A and NS5B) are cleaved by the viral proteases. Autoprocessing between NS2 and NS3 is mediated by the NS2 cysteine protease catalytic domain and regulated by the NS3 N-terminal domain. In terms of processing, phosphorylated by host PKC and PKA. Ubiquitinated; mediated by UBE3A and leading to core protein subsequent proteasomal degradation. Post-translationally, highly N-glycosylated.

The protein resides in the host endoplasmic reticulum membrane. Its subcellular location is the host mitochondrion membrane. The protein localises to the virion. It is found in the host cytoplasm. It localises to the host nucleus. The protein resides in the host lipid droplet. Its subcellular location is the virion membrane. Its function is as follows. Packages viral RNA to form a viral nucleocapsid, and promotes virion budding. Participates in the viral particle production as a result of its interaction with the non-structural protein 5A. Binds RNA and may function as a RNA chaperone to induce the RNA structural rearrangements taking place during virus replication. Modulates viral translation initiation by interacting with viral IRES and 40S ribosomal subunit. Affects various cell signaling pathways, host immunity and lipid metabolism. Prevents the establishment of cellular antiviral state by blocking the interferon-alpha/beta (IFN-alpha/beta) and IFN-gamma signaling pathways and by blocking the formation of phosphorylated STAT1 and promoting ubiquitin-mediated proteasome-dependent degradation of STAT1. Activates STAT3 leading to cellular transformation. Regulates the activity of cellular genes, including c-myc and c-fos. May repress the promoter of p53, and sequester CREB3 and SP110 isoform 3/Sp110b in the cytoplasm. Represses cell cycle negative regulating factor CDKN1A, thereby interrupting an important check point of normal cell cycle regulation. Targets transcription factors involved in the regulation of inflammatory responses and in the immune response: suppresses TNF-induced NF-kappa-B activation, and activates AP-1. Binds to dendritic cells (DCs) via C1QR1, resulting in down-regulation of T-lymphocytes proliferation. Alters lipid metabolism by interacting with hepatocellular proteins involved in lipid accumulation and storage. Induces up-regulation of FAS promoter activity, and thereby contributes to the increased triglyceride accumulation in hepatocytes (steatosis). Forms a heterodimer with envelope glycoprotein E2, which mediates virus attachment to the host cell, virion internalization through clathrin-dependent endocytosis and fusion with host membrane. Fusion with the host cell is most likely mediated by both E1 and E2, through conformational rearrangements of the heterodimer required for fusion rather than a classical class II fusion mechanism. E1/E2 heterodimer binds host apolipoproteins such as APOB and ApoE thereby forming a lipo-viro-particle (LVP). APOE associated to the LVP allows the initial virus attachment to cell surface receptors such as the heparan sulfate proteoglycans (HSPGs), syndecan-1 (SDC1), syndecan-1 (SDC2), the low-density lipoprotein receptor (LDLR) and scavenger receptor class B type I (SCARB1). The cholesterol transfer activity of SCARB1 allows E2 exposure and binding of E2 to SCARB1 and the tetraspanin CD81. E1/E2 heterodimer binding on CD81 activates the epithelial growth factor receptor (EGFR) signaling pathway. Diffusion of the complex E1-E2-EGFR-SCARB1-CD81 to the cell lateral membrane allows further interaction with Claudin 1 (CLDN1) and occludin (OCLN) to finally trigger HCV entry. Functionally, forms a heterodimer with envelope glycoprotein E1, which mediates virus attachment to the host cell, virion internalization through clathrin-dependent endocytosis and fusion with host membrane. Fusion with the host cell is most likely mediated by both E1 and E2, through conformational rearrangements of the heterodimer required for fusion rather than a classical class II fusion mechanism. The interaction between envelope glycoprotein E2 and host apolipoprotein E/APOE allows the proper assembly, maturation and infectivity of the viral particles. This interaction is probably promoted via the up-regulation of cellular autophagy by the virus. E1/E2 heterodimer binds host apolipoproteins such as APOB and APOE thereby forming a lipo-viro-particle (LVP). APOE associated to the LVP allows the initial virus attachment to cell surface receptors such as the heparan sulfate proteoglycans (HSPGs), syndecan-1 (SDC1), syndecan-1 (SDC2), the low-density lipoprotein receptor (LDLR) and scavenger receptor class B type I (SCARB1). The cholesterol transfer activity of SCARB1 allows E2 exposure and binding of E2 to SCARB1 and the tetraspanin CD81. E1/E2 heterodimer binding on CD81 activates the epithelial growth factor receptor (EGFR) signaling pathway. Diffusion of the complex E1-E2-EGFR-SCARB1-CD81 to the cell lateral membrane allows further interaction with Claudin 1 (CLDN1) and occludin (OCLN) to finally trigger HCV entry. Inhibits host EIF2AK2/PKR activation, preventing the establishment of an antiviral state. Viral ligand for CD209/DC-SIGN and CLEC4M/DC-SIGNR, which are respectively found on dendritic cells (DCs), and on liver sinusoidal endothelial cells and macrophage-like cells of lymph node sinuses. These interactions allow the capture of circulating HCV particles by these cells and subsequent facilitated transmission to permissive cells such as hepatocytes and lymphocyte subpopulations. The polypeptide is Genome polyprotein (Homo sapiens (Human)).